The sequence spans 440 residues: Trigger factor (440 aa).

The region spanning 163–248 (NDTVSINFKG…INSIKEKVLP (86 aa)) is the PPIase FKBP-type domain.

This sequence belongs to the FKBP-type PPIase family. Tig subfamily.

The protein localises to the cytoplasm. It catalyses the reaction [protein]-peptidylproline (omega=180) = [protein]-peptidylproline (omega=0). Functionally, involved in protein export. Acts as a chaperone by maintaining the newly synthesized protein in an open conformation. Functions as a peptidyl-prolyl cis-trans isomerase. In Finegoldia magna (strain ATCC 29328 / DSM 20472 / WAL 2508) (Peptostreptococcus magnus), this protein is Trigger factor.